Reading from the N-terminus, the 163-residue chain is Nucleotide-binding protein LBJ_2391 (163 aa).

It belongs to the YajQ family.

Its function is as follows. Nucleotide-binding protein. The polypeptide is Nucleotide-binding protein LBJ_2391 (Leptospira borgpetersenii serovar Hardjo-bovis (strain JB197)).